The chain runs to 378 residues: Cytochrome b (378 aa).

4 consecutive transmembrane segments (helical) span residues 34 to 54, 78 to 99, 114 to 134, and 179 to 199; these read FGSL…FLAM, WFLR…FIHV, WNTG…GYVL, and FFTF…IHLL. Heme b is bound by residues H84 and H98. Residues H183 and H197 each contribute to the heme b site. Position 202 (H202) interacts with a ubiquinone. 4 helical membrane passes run 227–247, 289–309, 321–341, and 348–368; these read YKDI…IWKF, LGGV…PFTH, LNQI…WIGA, and YILT…INPL.

The protein belongs to the cytochrome b family. The main subunits of complex b-c1 are: cytochrome b, cytochrome c1 and the Rieske protein. Heme b is required as a cofactor.

The protein resides in the mitochondrion inner membrane. Its function is as follows. Component of the ubiquinol-cytochrome c reductase complex (complex III or cytochrome b-c1 complex) that is part of the mitochondrial respiratory chain. The b-c1 complex mediates electron transfer from ubiquinol to cytochrome c. Contributes to the generation of a proton gradient across the mitochondrial membrane that is then used for ATP synthesis. This chain is Cytochrome b (mt:Cyt-b), found in Anopheles gambiae (African malaria mosquito).